A 135-amino-acid chain; its full sequence is Single-stranded DNA-binding protein RIM1, mitochondrial (135 aa).

A mitochondrion-targeting transit peptide spans 1 to 17 (MFLRTQARFFHATTKKM). Residues 19 to 117 (FSKMSIVGRI…LVQKDINLLK (99 aa)) enclose the SSB domain.

In terms of assembly, homotetramer. Interacts with PIF1.

The protein localises to the mitochondrion. This protein binds preferentially and cooperatively to single-stranded DNA (ssDNS). Involved in mitochondrial DNA replication. Stimulates PIF1 helicase activity. This Saccharomyces cerevisiae (strain ATCC 204508 / S288c) (Baker's yeast) protein is Single-stranded DNA-binding protein RIM1, mitochondrial (RIM1).